The chain runs to 91 residues: Protein SPATA45 homolog (91 aa).

Residues 42–91 (RADRKHDPNGFNSSVFKGASNQHQESSLDFATAEPEFHRERRHFPEKSEY) form a disordered region. The segment covering 51 to 70 (GFNSSVFKGASNQHQESSLD) has biased composition (polar residues). Basic and acidic residues predominate over residues 76 to 91 (PEFHRERRHFPEKSEY).

The protein belongs to the SPATA45 family.

This chain is Protein SPATA45 homolog, found in Nematostella vectensis (Starlet sea anemone).